The following is a 129-amino-acid chain: Large ribosomal subunit protein uL22 (129 aa).

The protein belongs to the universal ribosomal protein uL22 family. As to quaternary structure, part of the 50S ribosomal subunit.

Functionally, this protein binds specifically to 23S rRNA; its binding is stimulated by other ribosomal proteins, e.g. L4, L17, and L20. It is important during the early stages of 50S assembly. It makes multiple contacts with different domains of the 23S rRNA in the assembled 50S subunit and ribosome. Its function is as follows. The globular domain of the protein is located near the polypeptide exit tunnel on the outside of the subunit, while an extended beta-hairpin is found that lines the wall of the exit tunnel in the center of the 70S ribosome. This is Large ribosomal subunit protein uL22 from Sinorhizobium medicae (strain WSM419) (Ensifer medicae).